Consider the following 473-residue polypeptide: Protein AUXIN RESPONSE 4 (473 aa).

Acidic residues predominate over residues 1–10 (MAIITEEEED). The segment at 1–38 (MAIITEEEEDPKTLNPPKNKPKDSDFTKSESTMKNPKP) is disordered. Over residues 29 to 38 (SESTMKNPKP) the composition is skewed to polar residues. A helical transmembrane segment spans residues 44 to 64 (FPFWFYFTVVVSLATIIFISL). The AB hydrolase-1 domain maps to 119 to 283 (TVVIVHGLGL…DSSISPALPL (165 aa)).

As to expression, most abundant in root tissue, lesser amounts in rosette leaves, stems and flowers and very little in mature siliques.

The protein resides in the endoplasmic reticulum membrane. In terms of biological role, required for the auxin influx facilitator AUX1 polar trafficking and its asymmetric localization within the plasma membrane. Not involved in the PIN proteins localization. The sequence is that of Protein AUXIN RESPONSE 4 (AXR4) from Arabidopsis thaliana (Mouse-ear cress).